The chain runs to 176 residues: Ribosome rescue factor SmrB (176 aa).

In terms of domain architecture, Smr spans 93–168; the sequence is LDLHGYRQSE…GDAALLVLID (76 aa).

This sequence belongs to the SmrB family. Associates with collided ribosomes, but not with correctly translating polysomes.

Functionally, acts as a ribosome collision sensor. Detects stalled/collided disomes (pairs of ribosomes where the leading ribosome is stalled and a second ribosome has collided with it) and endonucleolytically cleaves mRNA at the 5' boundary of the stalled ribosome. Stalled/collided disomes form a new interface (primarily via the 30S subunits) that binds SmrB. Cleaved mRNA becomes available for tmRNA ligation, leading to ribosomal subunit dissociation and rescue of stalled ribosomes. The chain is Ribosome rescue factor SmrB from Shewanella baltica (strain OS223).